A 440-amino-acid chain; its full sequence is Zinc finger MYND domain-containing protein 10 (440 aa).

The Zn(2+) site is built by Cys-394, Cys-397, Cys-405, Cys-408, Cys-414, Cys-418, His-426, and Cys-430. Residues 394–430 form an MYND-type zinc finger; that stretch reads CGYCNAEASKRCSRCQNVWYCCRECQVKHWEKHGKTC.

This sequence belongs to the ZMYND10 family. Interacts (via C-terminus) with DNAAF11 (via CS domain); this interaction stabilizes DNAAF11 at the protein level. Interacts (via C-terminus) with DNAL1; this interaction stabilizes DNAL1 at the protein level. Interacts with DNAAF4, HSPA8, IQUB, RUVBL2 and DYNTL5. In terms of tissue distribution, expressed in the testis. Expressed in the tracheal epithelium. Restricted to regions containing motile cilia.

It is found in the cytoplasm. Its subcellular location is the cytoskeleton. It localises to the microtubule organizing center. The protein localises to the centrosome. The protein resides in the centriolar satellite. It is found in the apical cell membrane. Its subcellular location is the dynein axonemal particle. Plays a role in axonemal structure organization and motility. Involved in axonemal pre-assembly of inner and outer dynein arms (IDA and ODA, respectively) for proper axoneme building for cilia motility. May act by indirectly regulating transcription of dynein proteins. This chain is Zinc finger MYND domain-containing protein 10 (Zmynd10), found in Mus musculus (Mouse).